A 330-amino-acid polypeptide reads, in one-letter code: Lactamase-like protein nscB (330 aa).

Positions 97, 99, 101, and 102 each coordinate Zn(2+). Residue aspartate 101 is the Proton donor/acceptor of the active site.

It belongs to the metallo-beta-lactamase superfamily. Requires Zn(2+) as cofactor.

The protein operates within secondary metabolite biosynthesis. Its function is as follows. Lactamase-like protein; part of the gene cluster that mediates the biosynthesis of neosartoricin, a prenylated anthracenone that exhibits T-cell antiproliferative activity, suggestive of a physiological role as an immunosuppressive agent. The non-reducing polyketide synthase nscA probably synthesizes and cyclizes the decaketide backbone. The hydrolase nscB then mediates the product release through hydrolysis followed by spontaneous decarboxylation. The prenyltransferase nscD catalyzes the addition of the dimethylallyl group to the aromatic C5. The FAD-dependent monooxygenase nscC is then responsible for the stereospecific hydroxylation at C2. There is no gene encoding O-acetyltransferase in the nsc gene cluster; thus, the last step of 2-O-acetylation leading to neosartoricin may be catalyzed by an unidentified O-acetyltransferase. This is Lactamase-like protein nscB from Aspergillus fumigatus (strain ATCC MYA-4609 / CBS 101355 / FGSC A1100 / Af293) (Neosartorya fumigata).